Here is a 292-residue protein sequence, read N- to C-terminus: NAD kinase (292 aa).

The Proton acceptor role is filled by aspartate 72. NAD(+) is bound by residues 72–73 (DG), 146–147 (NE), histidine 157, arginine 174, aspartate 176, and 187–192 (TAYSLS).

Belongs to the NAD kinase family. The cofactor is a divalent metal cation.

The protein localises to the cytoplasm. It catalyses the reaction NAD(+) + ATP = ADP + NADP(+) + H(+). Functionally, involved in the regulation of the intracellular balance of NAD and NADP, and is a key enzyme in the biosynthesis of NADP. Catalyzes specifically the phosphorylation on 2'-hydroxyl of the adenosine moiety of NAD to yield NADP. This chain is NAD kinase, found in Shewanella loihica (strain ATCC BAA-1088 / PV-4).